The following is a 104-amino-acid chain: PE-PGRS family protein PE_PGRS60 (104 aa).

Positions 1–60 (MSYVIAAPEALVAAATDLATLGSTIGAANAAAAGSTTALLTAGADEVSAAIAAYSECTAR) constitute a PE domain. The tract at residues 64–104 (HSVRGRRRSMSGSCRPWPQVGAPMRPPRPPASRRCRARSIC) is disordered. Positions 94–104 (ASRRCRARSIC) are enriched in basic residues.

The protein belongs to the mycobacterial PE family. PGRS subfamily.

Binds fibronectin. May contribute to pathogenicity. This chain is PE-PGRS family protein PE_PGRS60, found in Mycobacterium tuberculosis (strain ATCC 25618 / H37Rv).